Consider the following 202-residue polypeptide: ATP-dependent dethiobiotin synthetase BioD (202 aa).

Residue 12–17 participates in ATP binding; the sequence is GIGKTI. A Mg(2+)-binding site is contributed by Thr-16. Lys-32 is a catalytic residue. Ser-36 contacts substrate. ATP contacts are provided by residues Asp-43, 94-97, and 178-180; these read EGAG and PVV. 2 residues coordinate Mg(2+): Asp-43 and Glu-94.

This sequence belongs to the dethiobiotin synthetase family. As to quaternary structure, homodimer. It depends on Mg(2+) as a cofactor.

The protein localises to the cytoplasm. It carries out the reaction (7R,8S)-7,8-diammoniononanoate + CO2 + ATP = (4R,5S)-dethiobiotin + ADP + phosphate + 3 H(+). It participates in cofactor biosynthesis; biotin biosynthesis; biotin from 7,8-diaminononanoate: step 1/2. Its function is as follows. Catalyzes a mechanistically unusual reaction, the ATP-dependent insertion of CO2 between the N7 and N8 nitrogen atoms of 7,8-diaminopelargonic acid (DAPA, also called 7,8-diammoniononanoate) to form a ureido ring. The protein is ATP-dependent dethiobiotin synthetase BioD of Sphingopyxis alaskensis (strain DSM 13593 / LMG 18877 / RB2256) (Sphingomonas alaskensis).